Consider the following 440-residue polypeptide: 26S proteasome regulatory subunit 4 (440 aa).

Positions 1–13 (MGQSQSGGHGPGG) are enriched in gly residues. The interval 1 to 49 (MGQSQSGGHGPGGGKKDDKDKKKKYEPPVPTRVGKKKKKTKGPDAASKL) is disordered. Residue G2 is the site of N-myristoyl glycine attachment. S4 carries the post-translational modification Phosphoserine. Residues 14–26 (GKKDDKDKKKKYE) are compositionally biased toward basic and acidic residues. Residue T53 is modified to Phosphothreonine. Positions 84-104 (QMKPLEEKQEEERSKVDDLRG) are disordered. Basic and acidic residues predominate over residues 86–103 (KPLEEKQEEERSKVDDLR). 226-233 (GPPGTGKT) is a binding site for ATP. K237 is covalently cross-linked (Glycyl lysine isopeptide (Lys-Gly) (interchain with G-Cter in ubiquitin)). Residue K258 is modified to N6-acetyllysine. T434 is subject to Phosphothreonine. A Phosphotyrosine modification is found at Y439.

It belongs to the AAA ATPase family. In terms of assembly, component of the 19S proteasome regulatory particle complex. The 26S proteasome consists of a 20S core particle (CP) and two 19S regulatory subunits (RP). The regulatory particle is made of a lid composed of 9 subunits, a base containing 6 ATPases including PSMC1 and few additional components. Interacts with SCA7. Interacts with NGLY1. Interacts with PAAF1.

It is found in the cytoplasm. The protein localises to the nucleus. The protein resides in the membrane. Its function is as follows. Component of the 26S proteasome, a multiprotein complex involved in the ATP-dependent degradation of ubiquitinated proteins. This complex plays a key role in the maintenance of protein homeostasis by removing misfolded or damaged proteins, which could impair cellular functions, and by removing proteins whose functions are no longer required. Therefore, the proteasome participates in numerous cellular processes, including cell cycle progression, apoptosis, or DNA damage repair. PSMC1 belongs to the heterohexameric ring of AAA (ATPases associated with diverse cellular activities) proteins that unfolds ubiquitinated target proteins that are concurrently translocated into a proteolytic chamber and degraded into peptides. The sequence is that of 26S proteasome regulatory subunit 4 (PSMC1) from Homo sapiens (Human).